Consider the following 213-residue polypeptide: MOB kinase activator-like 1 homolog A (213 aa).

4 residues coordinate Zn(2+): Cys-77, Cys-82, His-159, and His-164.

It belongs to the MOB1/phocein family.

This is MOB kinase activator-like 1 homolog A (mobA) from Dictyostelium discoideum (Social amoeba).